A 252-amino-acid chain; its full sequence is Protein PYRAB15930 (252 aa).

This sequence belongs to the CinA family.

In Pyrococcus abyssi (strain GE5 / Orsay), this protein is Protein PYRAB15930.